Reading from the N-terminus, the 353-residue chain is Quinolinate synthase (353 aa).

Positions 47 and 68 each coordinate iminosuccinate. Cys-113 contributes to the [4Fe-4S] cluster binding site. Iminosuccinate is bound by residues 139–141 and Ser-156; that span reads YAN. Cys-200 is a [4Fe-4S] cluster binding site. Iminosuccinate is bound by residues 226–228 and Thr-243; that span reads HPE. Residue Cys-297 participates in [4Fe-4S] cluster binding.

Belongs to the quinolinate synthase family. Type 1 subfamily. Requires [4Fe-4S] cluster as cofactor.

It localises to the cytoplasm. The catalysed reaction is iminosuccinate + dihydroxyacetone phosphate = quinolinate + phosphate + 2 H2O + H(+). The protein operates within cofactor biosynthesis; NAD(+) biosynthesis; quinolinate from iminoaspartate: step 1/1. Catalyzes the condensation of iminoaspartate with dihydroxyacetone phosphate to form quinolinate. This chain is Quinolinate synthase, found in Yersinia pestis bv. Antiqua (strain Antiqua).